The chain runs to 284 residues: Nucleotide-binding protein PP_0949 (284 aa).

8–15 (GRSGSGKS) contributes to the ATP binding site. Residue 60–63 (DARN) participates in GTP binding.

It belongs to the RapZ-like family.

Functionally, displays ATPase and GTPase activities. The protein is Nucleotide-binding protein PP_0949 of Pseudomonas putida (strain ATCC 47054 / DSM 6125 / CFBP 8728 / NCIMB 11950 / KT2440).